We begin with the raw amino-acid sequence, 264 residues long: MKQYKDFCRHVLEHGEKKGDRTGTGTISTFGYQMRFNLREGFPMLTTKKLHFKSIAHELLWFLKGDTNVRYLQENGVRIWNEWADENGELGPVYGSQWRSWRGADGETIDQISRLIEDIKTNPNSRRLIVSAWNVGEIDKMALPPCHCLFQFYVSDGKLSCQLYQRSADVFLGVPFNIASYALLTMIIAHVTGLEPGEFIHTFGDVHIYQNHIEQVNLQLERDVRPLPQLRFARKVDSIFNFAFEDFIIEDYDPHPHIKGAVSV.

R21 is a binding site for dUMP. H51 contacts (6R)-5,10-methylene-5,6,7,8-tetrahydrofolate. Residue 126–127 (RR) participates in dUMP binding. The active-site Nucleophile is the C146. DUMP is bound by residues 166 to 169 (RSAD), N177, and 207 to 209 (HIY). Residue D169 coordinates (6R)-5,10-methylene-5,6,7,8-tetrahydrofolate. S263 is a binding site for (6R)-5,10-methylene-5,6,7,8-tetrahydrofolate.

This sequence belongs to the thymidylate synthase family. Bacterial-type ThyA subfamily. In terms of assembly, homodimer.

It is found in the cytoplasm. The enzyme catalyses dUMP + (6R)-5,10-methylene-5,6,7,8-tetrahydrofolate = 7,8-dihydrofolate + dTMP. It functions in the pathway pyrimidine metabolism; dTTP biosynthesis. Functionally, catalyzes the reductive methylation of 2'-deoxyuridine-5'-monophosphate (dUMP) to 2'-deoxythymidine-5'-monophosphate (dTMP) while utilizing 5,10-methylenetetrahydrofolate (mTHF) as the methyl donor and reductant in the reaction, yielding dihydrofolate (DHF) as a by-product. This enzymatic reaction provides an intracellular de novo source of dTMP, an essential precursor for DNA biosynthesis. This chain is Thymidylate synthase 2, found in Bacillus subtilis (strain 168).